Consider the following 64-residue polypeptide: Translation machinery-associated protein 7 homolog (64 aa).

Residues 1–64 (MSGRQGGKAK…GGGIKKSGKK (64 aa)) are disordered. A coiled-coil region spans residues 21-50 (DLSEEDVEFKKKQQEEAKKIKEMAAKAGQR). A compositionally biased stretch (basic and acidic residues) spans 28-44 (EFKKKQQEEAKKIKEMA). A compositionally biased stretch (gly residues) spans 53–64 (LLGGGIKKSGKK).

The protein belongs to the TMA7 family.

This chain is Translation machinery-associated protein 7 homolog, found in Caenorhabditis elegans.